The primary structure comprises 327 residues: Cytochrome c biogenesis protein CcsA (327 aa).

A run of 8 helical transmembrane segments spans residues 13-33, 46-66, 73-93, 101-121, 145-165, 233-253, 262-282, and 294-314; these read ISFS…LVNL, GIII…IYSG, LYES…VSYF, LNAI…SGLL, MILG…LLVI, IISL…VWAN, WDPK…YLHI, and AIVA…VNLL.

The protein belongs to the CcmF/CycK/Ccl1/NrfE/CcsA family. In terms of assembly, may interact with Ccs1.

The protein resides in the plastid. It localises to the chloroplast thylakoid membrane. In terms of biological role, required during biogenesis of c-type cytochromes (cytochrome c6 and cytochrome f) at the step of heme attachment. This is Cytochrome c biogenesis protein CcsA from Lobularia maritima (Sweet alyssum).